A 550-amino-acid chain; its full sequence is Glucose-6-phosphate isomerase 2 (550 aa).

Glu357 functions as the Proton donor in the catalytic mechanism. Residues His388 and Lys514 contribute to the active site. The disordered stretch occupies residues 527 to 550; that stretch reads DTGALGHDSSTNGLIRHYRERHGK.

This sequence belongs to the GPI family.

It is found in the cytoplasm. The catalysed reaction is alpha-D-glucose 6-phosphate = beta-D-fructose 6-phosphate. The protein operates within carbohydrate biosynthesis; gluconeogenesis. It functions in the pathway carbohydrate degradation; glycolysis; D-glyceraldehyde 3-phosphate and glycerone phosphate from D-glucose: step 2/4. Catalyzes the reversible isomerization of glucose-6-phosphate to fructose-6-phosphate. The polypeptide is Glucose-6-phosphate isomerase 2 (Chromobacterium violaceum (strain ATCC 12472 / DSM 30191 / JCM 1249 / CCUG 213 / NBRC 12614 / NCIMB 9131 / NCTC 9757 / MK)).